Consider the following 204-residue polypeptide: MGKRLNSKHKIDRRLGVNLWGRPKSPINKREYGPGEHGQRRRKPSDFGIQLMAKQKLKGYYGNISEKAFRKYYEEASSRRGDTSENLISILETRLDAVVYRMKIVPTVFSSRQIINHGHILVNGRRVSVASYRVQEGDVIEVKEKSRQMPLILEALQSHERDIPEYITMDLAHAKGTFLRAPKLEDVPYPVQMEPNLVVEFYSR.

Residues 20–46 form a disordered region; the sequence is WGRPKSPINKREYGPGEHGQRRRKPSD. Over residues 28–38 the composition is skewed to basic and acidic residues; the sequence is NKREYGPGEHG. The region spanning 93–156 is the S4 RNA-binding domain; the sequence is TRLDAVVYRM…RQMPLILEAL (64 aa).

This sequence belongs to the universal ribosomal protein uS4 family. As to quaternary structure, part of the 30S ribosomal subunit. Contacts protein S5. The interaction surface between S4 and S5 is involved in control of translational fidelity.

Functionally, one of the primary rRNA binding proteins, it binds directly to 16S rRNA where it nucleates assembly of the body of the 30S subunit. With S5 and S12 plays an important role in translational accuracy. In Rhodospirillum rubrum (strain ATCC 11170 / ATH 1.1.1 / DSM 467 / LMG 4362 / NCIMB 8255 / S1), this protein is Small ribosomal subunit protein uS4.